The sequence spans 149 residues: Inner membrane protein YdcZ (149 aa).

Residues 1 to 4 (MNQS) lie on the Periplasmic side of the membrane. The chain crosses the membrane as a helical span at residues 5-25 (LTLAFLIAAGIGLVVQNTLMV). Topologically, residues 26-33 (RITQTSST) are cytoplasmic. Residues 34 to 54 (ILIAMLLNSLVGIVLFVSILW) traverse the membrane as a helical segment. At 55 to 70 (FKQGMAGFGELVSSVR) the chain is on the periplasmic side. The helical transmembrane segment at 71–91 (WWTLIPGLLGSFFVFASISGY) threads the bilayer. The Cytoplasmic portion of the chain corresponds to 92 to 93 (QN). The chain crosses the membrane as a helical span at residues 94–114 (VGAATTIAVLVASQLIGGLML). Over 115–123 (DIFRSHGVP) the chain is Periplasmic. A helical membrane pass occupies residues 124–144 (LRALFGPICGAILLVVGAWLV). Residues 145-149 (ARRSF) lie on the Cytoplasmic side of the membrane.

The protein localises to the cell inner membrane. This Escherichia coli (strain K12) protein is Inner membrane protein YdcZ (ydcZ).